A 559-amino-acid polypeptide reads, in one-letter code: TBC1 domain family member 24 (559 aa).

Residues Lys36, Arg40, Lys238, Arg242, and 293–297 each bind a 1,2-diacyl-sn-glycero-3-phospho-(1D-myo-inositol); that span reads RLFSR. Residues 47 to 262 enclose the Rab-GAP TBC domain; that stretch reads SHALRGKVYQ…KVRAGQPLES (216 aa). Residues 343 to 554 enclose the TLDc domain; sequence EIVSVREMRD…IAAVEAWGFQ (212 aa). 2 positions are modified to phosphoserine: Ser473 and Ser480.

As to quaternary structure, interacts with ARF6. In terms of tissue distribution, highest expression in brain.

Its subcellular location is the cell membrane. It is found in the cytoplasm. The protein resides in the cytoplasmic vesicle membrane. It localises to the presynapse. In terms of biological role, may act as a GTPase-activating protein for Rab family protein(s). Involved in neuronal projections development, probably through a negative modulation of ARF6 function. Involved in the regulation of synaptic vesicle trafficking. The chain is TBC1 domain family member 24 (TBC1D24) from Homo sapiens (Human).